Consider the following 546-residue polypeptide: Chaperonin GroEL (546 aa).

Residues 30–33, Lys51, 87–91, Gly415, 479–481, and Asp495 contribute to the ATP site; these read TLGP, DGTTT, and NAA. Residues 527-546 are disordered; that stretch reads EEKPDVSASSGGMGGMGGMM. A compositionally biased stretch (gly residues) spans 537–546; the sequence is GGMGGMGGMM.

The protein belongs to the chaperonin (HSP60) family. Forms a cylinder of 14 subunits composed of two heptameric rings stacked back-to-back. Interacts with the co-chaperonin GroES.

The protein localises to the cytoplasm. The enzyme catalyses ATP + H2O + a folded polypeptide = ADP + phosphate + an unfolded polypeptide.. Together with its co-chaperonin GroES, plays an essential role in assisting protein folding. The GroEL-GroES system forms a nano-cage that allows encapsulation of the non-native substrate proteins and provides a physical environment optimized to promote and accelerate protein folding. The sequence is that of Chaperonin GroEL from Baumannia cicadellinicola subsp. Homalodisca coagulata.